A 190-amino-acid polypeptide reads, in one-letter code: Pyridoxal 5'-phosphate synthase subunit PdxT (190 aa).

46–48 (GES) provides a ligand contact to L-glutamine. The active-site Nucleophile is Cys-78. Residues Arg-108 and 137-138 (IR) each bind L-glutamine. Active-site charge relay system residues include His-174 and Glu-176.

Belongs to the glutaminase PdxT/SNO family. As to quaternary structure, in the presence of PdxS, forms a dodecamer of heterodimers. Only shows activity in the heterodimer.

The catalysed reaction is aldehydo-D-ribose 5-phosphate + D-glyceraldehyde 3-phosphate + L-glutamine = pyridoxal 5'-phosphate + L-glutamate + phosphate + 3 H2O + H(+). It carries out the reaction L-glutamine + H2O = L-glutamate + NH4(+). It participates in cofactor biosynthesis; pyridoxal 5'-phosphate biosynthesis. Its function is as follows. Catalyzes the hydrolysis of glutamine to glutamate and ammonia as part of the biosynthesis of pyridoxal 5'-phosphate. The resulting ammonia molecule is channeled to the active site of PdxS. This Chloroflexus aurantiacus (strain ATCC 29366 / DSM 635 / J-10-fl) protein is Pyridoxal 5'-phosphate synthase subunit PdxT.